The sequence spans 479 residues: Integrin-linked protein kinase 1 (479 aa).

Phosphoserine occurs at positions 17 and 26. Residues 29 to 73 (FTRQSSLDPRRTNMRFSFGRQSSLDPIRRSPDSSKSDDEPHMSVP) form a disordered region. Positions 54-69 (PIRRSPDSSKSDDEPH) are enriched in basic and acidic residues. ANK repeat units follow at residues 77–106 (DSTM…DVNS) and 110–139 (DGRT…NIDA). The region spanning 194-461 (LEVQVRKSDG…EIIIRLDKIV (268 aa)) is the Protein kinase domain. Residues 200–208 (KSDGISKGA) and Lys-222 each bind ATP. The active-site Proton acceptor is Asp-319.

The protein belongs to the protein kinase superfamily. Ser/Thr protein kinase family. In terms of assembly, interacts with CML9 and POT5/HAK5. In terms of processing, autophosphorylated at Ser-17 and Ser-26.

The protein resides in the cell membrane. Its subcellular location is the endoplasmic reticulum membrane. It carries out the reaction L-seryl-[protein] + ATP = O-phospho-L-seryl-[protein] + ADP + H(+). The catalysed reaction is L-threonyl-[protein] + ATP = O-phospho-L-threonyl-[protein] + ADP + H(+). With respect to regulation, kinase activity is suppressed by interaction with CML9. Functionally, functions as a link between plant defense pathways, stress responses and potassium homeostasis. Promotes osmotic stress sensitivity, responses to the bacterial-derived pathogen-associated molecular pattern (PAMP) flg22, and resistance to bacterial pathogens. Promotes the accumulation of POT5/HAK5, a potassium transporter that mediates high-affinity uptake during potassium deficiency. The chain is Integrin-linked protein kinase 1 from Arabidopsis thaliana (Mouse-ear cress).